The primary structure comprises 265 residues: MLQNIAIGQYVPGQSFLHRADPRSKLLFIILFATLIFLANNTVTYAILIGFTLYAALLSRLSLSYILKSLKPVWILILFTVVLHIFITKGGTVYFQWGWFTVEEQGVRQAIFISLRLGLLILISSLLTLTTSPIDLTEGLERLLGPLGKIGIPVHDIALMMSIALRFIPTLMEETDKIIKAQTARGANFTSGSLVRRAKNLIPIAIPLFVSAFRRAEELALAMEARGYRGGVGRTRLNKLTFTWRDGIVAVVSVILVIVIGWWRT.

5 helical membrane-spanning segments follow: residues 29–49 (IILFATLIFLANNTVTYAILI), 73–93 (VWILILFTVVLHIFITKGGTV), 110–130 (AIFISLRLGLLILISSLLTLT), 143–163 (LLGPLGKIGIPVHDIALMMSI), and 242–262 (FTWRDGIVAVVSVILVIVIGW).

This sequence belongs to the energy-coupling factor EcfT family. As to quaternary structure, forms a stable energy-coupling factor (ECF) transporter complex composed of 2 membrane-embedded substrate-binding proteins (S component), 2 ATP-binding proteins (A component) and 2 transmembrane proteins (T component). May be able to interact with more than 1 S component at a time.

It localises to the cell membrane. In terms of biological role, transmembrane (T) component of an energy-coupling factor (ECF) ABC-transporter complex. Unlike classic ABC transporters this ECF transporter provides the energy necessary to transport a number of different substrates. The sequence is that of Energy-coupling factor transporter transmembrane protein EcfT from Brevibacillus brevis (strain 47 / JCM 6285 / NBRC 100599).